A 179-amino-acid polypeptide reads, in one-letter code: Inner membrane-spanning protein YciB (179 aa).

6 consecutive transmembrane segments (helical) span residues 3 to 23 (FLFD…ADIY), 24 to 44 (TATA…WFRH), 49 to 69 (PMQW…LVLH), 76 to 96 (WKPT…VLVW), 121 to 141 (LAWA…AYQF), and 149 to 169 (FKLF…SVWL).

It belongs to the YciB family.

It is found in the cell inner membrane. In terms of biological role, plays a role in cell envelope biogenesis, maintenance of cell envelope integrity and membrane homeostasis. This is Inner membrane-spanning protein YciB from Cupriavidus taiwanensis (strain DSM 17343 / BCRC 17206 / CCUG 44338 / CIP 107171 / LMG 19424 / R1) (Ralstonia taiwanensis (strain LMG 19424)).